Reading from the N-terminus, the 61-residue chain is Metallothionein-1E (61 aa).

M1 carries the N-acetylmethionine modification. The tract at residues 1–29 is beta; it reads MDPNCSCPTGGSCSCAGSCTCKACRCTSC. C5, C7, C13, C15, C19, C21, C24, C26, C29, C33, C34, C36, C37, C41, C44, C48, C50, C57, C59, and C60 together coordinate a divalent metal cation. The interval 30-61 is alpha; the sequence is KKSCCSCCPVGCAKCAQGCICKGASDKCSCCA.

It belongs to the metallothionein superfamily. Type 1 family. As to quaternary structure, monomer.

Metallothioneins have a high content of cysteine residues that bind various heavy metals; these proteins are transcriptionally regulated by both heavy metals and glucocorticoids. The sequence is that of Metallothionein-1E (MT1E) from Sus scrofa (Pig).